The following is a 183-amino-acid chain: Isopentenyl-diphosphate Delta-isomerase (183 aa).

Positions 26 and 33 each coordinate Mn(2+). The Nudix hydrolase domain maps to 31–169; sequence PLHFAFSCYV…PFAFSPWMVE (139 aa). The active site involves Cys-68. Cys-68 serves as a coordination point for Mg(2+). Position 70 (His-70) interacts with Mn(2+). Residue Glu-88 coordinates Mg(2+). Residues Glu-118 and Glu-120 each contribute to the Mn(2+) site. The active site involves Glu-120.

This sequence belongs to the IPP isomerase type 1 family. Mg(2+) is required as a cofactor. Requires Mn(2+) as cofactor.

It localises to the cytoplasm. It catalyses the reaction isopentenyl diphosphate = dimethylallyl diphosphate. Its pathway is isoprenoid biosynthesis; dimethylallyl diphosphate biosynthesis; dimethylallyl diphosphate from isopentenyl diphosphate: step 1/1. In terms of biological role, catalyzes the 1,3-allylic rearrangement of the homoallylic substrate isopentenyl (IPP) to its highly electrophilic allylic isomer, dimethylallyl diphosphate (DMAPP). In Corynebacterium diphtheriae (strain ATCC 700971 / NCTC 13129 / Biotype gravis), this protein is Isopentenyl-diphosphate Delta-isomerase.